Here is a 622-residue protein sequence, read N- to C-terminus: Chaperone protein HscA homolog (622 aa).

Belongs to the heat shock protein 70 family.

Chaperone involved in the maturation of iron-sulfur cluster-containing proteins. Has a low intrinsic ATPase activity which is markedly stimulated by HscB. This chain is Chaperone protein HscA homolog, found in Methylobacillus flagellatus (strain ATCC 51484 / DSM 6875 / VKM B-1610 / KT).